Reading from the N-terminus, the 454-residue chain is tRNA-2-methylthio-N(6)-dimethylallyladenosine synthase (454 aa).

Positions 6–122 (RRYHITTYGC…LQDLLEQVAS (117 aa)) constitute an MTTase N-terminal domain. [4Fe-4S] cluster is bound by residues Cys15, Cys51, Cys85, Cys157, Cys161, and Cys164. The Radical SAM core domain occupies 143–384 (RDSAVTAWVN…GVCAELRSQR (242 aa)). The TRAM domain occupies 383–447 (QRYANRIEEV…SFSLTGEPLS (65 aa)).

It belongs to the methylthiotransferase family. MiaB subfamily. In terms of assembly, monomer. [4Fe-4S] cluster is required as a cofactor.

It localises to the cytoplasm. The catalysed reaction is N(6)-dimethylallyladenosine(37) in tRNA + (sulfur carrier)-SH + AH2 + 2 S-adenosyl-L-methionine = 2-methylsulfanyl-N(6)-dimethylallyladenosine(37) in tRNA + (sulfur carrier)-H + 5'-deoxyadenosine + L-methionine + A + S-adenosyl-L-homocysteine + 2 H(+). In terms of biological role, catalyzes the methylthiolation of N6-(dimethylallyl)adenosine (i(6)A), leading to the formation of 2-methylthio-N6-(dimethylallyl)adenosine (ms(2)i(6)A) at position 37 in tRNAs that read codons beginning with uridine. This Acaryochloris marina (strain MBIC 11017) protein is tRNA-2-methylthio-N(6)-dimethylallyladenosine synthase.